Reading from the N-terminus, the 330-residue chain is 2-phospho-L-lactate transferase (330 aa).

Aspartate 49 is a binding site for 7,8-didemethyl-8-hydroxy-5-deazariboflavin.

Belongs to the CofD family. Homodimer. It depends on Mg(2+) as a cofactor.

The catalysed reaction is (2S)-lactyl-2-diphospho-5'-guanosine + 7,8-didemethyl-8-hydroxy-5-deazariboflavin = oxidized coenzyme F420-0 + GMP + H(+). Its pathway is cofactor biosynthesis; coenzyme F420 biosynthesis. Its function is as follows. Catalyzes the transfer of the 2-phospholactate moiety from (2S)-lactyl-2-diphospho-5'-guanosine to 7,8-didemethyl-8-hydroxy-5-deazariboflavin (FO) with the formation of oxidized coenzyme F420-0 and GMP. In Haloarcula marismortui (strain ATCC 43049 / DSM 3752 / JCM 8966 / VKM B-1809) (Halobacterium marismortui), this protein is 2-phospho-L-lactate transferase.